The following is a 365-amino-acid chain: D-alanine--D-alanine ligase (365 aa).

The ATP-grasp domain occupies 135–345 (KLLLKSFNIP…YGSLVDKLIA (211 aa)). ATP is bound at residue 168–223 (KQSLDYPVIVKPAMLGSSIGISIAYNETQIEKCIEEAFAYDLTVVIEKFMRAREIE). Residues D298, E312, and N314 each contribute to the Mg(2+) site.

Belongs to the D-alanine--D-alanine ligase family. Mg(2+) is required as a cofactor. Requires Mn(2+) as cofactor.

It is found in the cytoplasm. The enzyme catalyses 2 D-alanine + ATP = D-alanyl-D-alanine + ADP + phosphate + H(+). It functions in the pathway cell wall biogenesis; peptidoglycan biosynthesis. Functionally, cell wall formation. The chain is D-alanine--D-alanine ligase from Borrelia turicatae (strain 91E135).